We begin with the raw amino-acid sequence, 476 residues long: Serine carboxypeptidase 2 (476 aa).

Residues 1 to 34 (MRTTTRRLPPAPAAAAVLLAALTCLLLRPAAVAA) form the signal peptide. Cystine bridges form between C97-C353, C254-C266, and C290-C320. N148 and N159 each carry an N-linked (GlcNAc...) asparagine glycan. The active site involves S190. N291 carries an N-linked (GlcNAc...) asparagine glycan. A propeptide spans 295-313 (SSSSSSLSRRRTRGRYPWL) (linker peptide). Blocked amino end (Thr) is present on T314. Residues N341 and N347 are each glycosylated (N-linked (GlcNAc...) asparagine). The N-linked (GlcNAc...) asparagine; partial glycan is linked to N352. Residue N352 is glycosylated (O-linked (GalNAc...) threonine; in variant 351-AT-352). Catalysis depends on residues D390 and H443. The N-linked (GlcNAc...) asparagine glycan is linked to N472.

The protein belongs to the peptidase S10 family. Carboxypeptidase II is a dimer, where each monomer is composed of two chains linked by a disulfide bond.

It localises to the secreted. It carries out the reaction Preferential release of a C-terminal arginine or lysine residue.. May be involved in the degradation of small peptides (2-5 residues) or in the degradation of storage proteins in the embryo. The polypeptide is Serine carboxypeptidase 2 (CBP2) (Hordeum vulgare (Barley)).